Reading from the N-terminus, the 151-residue chain is Calmodulin (151 aa).

4 EF-hand domains span residues 10–45 (EQISEFKEAFSLFDKDGDGSITTKELGIVMRSLGQN), 46–81 (PTEAELQDMVNEVDADGNGTIDFPEFLAMMARKMKD), 83–118 (DSEEEIREAFKVFDKDGNGIISAAELRHVMTNLGEK), and 119–151 (LTDEEVDEMIREADVDGDGVIDYSEFVKMMLSK). Asp-23, Asp-25, Asp-27, Ser-29, Glu-34, Asp-59, Asp-61, Asn-63, Thr-65, Glu-70, Asp-96, Asp-98, Asn-100, Glu-107, Asp-132, Asp-134, Asp-136, and Glu-143 together coordinate Ca(2+).

This sequence belongs to the calmodulin family.

Calmodulin mediates the control of a large number of enzymes, ion channels and other proteins by Ca(2+). Among the enzymes to be stimulated by the calmodulin-Ca(2+) complex are a number of protein kinases and phosphatases. This chain is Calmodulin, found in Pneumocystis carinii.